The primary structure comprises 408 residues: Putative odorant receptor 92a (408 aa).

Over 1–52 (MLFRKRKPKSDDEVITFDELTRFPMTFYKTIGEDLYSDRDPNVIRRYLLRFY) the chain is Cytoplasmic. A helical membrane pass occupies residues 53–73 (LVLGFLNFNAYVVGEIAYFIV). Position 74 (His-74) is a topological domain, extracellular. The chain crosses the membrane as a helical span at residues 75–95 (IMSTTTLLEATAVAPCIGFSF). Over 96–144 (MADFKQFGLTVNRKRLVRLLDDLKEIFPLDLEAQRKYNVSFYRKHMNRV) the chain is Cytoplasmic. The chain crosses the membrane as a helical span at residues 145-165 (MTLFTILCMTYTSSFSFYPAI). Topologically, residues 166–209 (KSTIKYYLMGSEIFERNYGFHILFPYDAETDLTVYWFSYWGLAH) are extracellular. Residues 210–230 (CAYVAGVSYVCVDLLLIATIT) form a helical membrane-spanning segment. At 231–276 (QLTMHFNFIANDLEAYEGGDHTDEENIKYLHNLVVYHARALDLSEE) the chain is on the cytoplasmic side. A helical membrane pass occupies residues 277 to 301 (VNNIFSFLILWNFIAASLVICFAGF). At 302–310 (QITASNVED) the chain is on the extracellular side. A helical transmembrane segment spans residues 311 to 331 (IVLYFIFFSASLVQVFVVCYY). Topologically, residues 332 to 378 (GDEMISSSSRIGHSAFNQNWLPCSTKYKRILQFIIARSQKPASIRPP) are cytoplasmic. A helical transmembrane segment spans residues 379 to 399 (TFPPISFNTFMKVISMSYQFF). Over 400–408 (ALLRTTYYG) the chain is Extracellular.

Belongs to the insect chemoreceptor superfamily. Heteromeric odorant receptor channel (TC 1.A.69) family. Or49a subfamily. As to quaternary structure, interacts with Orco. Complexes exist early in the endomembrane system in olfactory sensory neurons (OSNs), coupling these complexes to the conserved ciliary trafficking pathway.

The protein localises to the cell membrane. In terms of biological role, odorant receptor which mediates acceptance or avoidance behavior, depending on its substrates. The odorant receptor repertoire encodes a large collection of odor stimuli that vary widely in identity, intensity, and duration. May form a complex with Orco to form odorant-sensing units, providing sensitive and prolonged odorant signaling and calcium permeability. The protein is Putative odorant receptor 92a (Or92a) of Drosophila melanogaster (Fruit fly).